The sequence spans 265 residues: Undecaprenyl-diphosphatase (265 aa).

7 helical membrane-spanning segments follow: residues 38–58 (SDMF…IIYW), 80–100 (LIVA…LGFE), 107–127 (PIAW…WAAA), 135–155 (ITWL…VFPG), 178–198 (TEFA…YELL), 216–236 (IAFV…LAYI), and 244–264 (FAIY…TGLI).

It belongs to the UppP family.

The protein localises to the cell inner membrane. It carries out the reaction di-trans,octa-cis-undecaprenyl diphosphate + H2O = di-trans,octa-cis-undecaprenyl phosphate + phosphate + H(+). Its function is as follows. Catalyzes the dephosphorylation of undecaprenyl diphosphate (UPP). Confers resistance to bacitracin. The polypeptide is Undecaprenyl-diphosphatase (Rhizobium johnstonii (strain DSM 114642 / LMG 32736 / 3841) (Rhizobium leguminosarum bv. viciae)).